Here is a 397-residue protein sequence, read N- to C-terminus: Tryptophan synthase beta chain (397 aa).

Lys-87 is subject to N6-(pyridoxal phosphate)lysine.

The protein belongs to the TrpB family. As to quaternary structure, tetramer of two alpha and two beta chains. The cofactor is pyridoxal 5'-phosphate.

It carries out the reaction (1S,2R)-1-C-(indol-3-yl)glycerol 3-phosphate + L-serine = D-glyceraldehyde 3-phosphate + L-tryptophan + H2O. It functions in the pathway amino-acid biosynthesis; L-tryptophan biosynthesis; L-tryptophan from chorismate: step 5/5. In terms of biological role, the beta subunit is responsible for the synthesis of L-tryptophan from indole and L-serine. In Salmonella choleraesuis (strain SC-B67), this protein is Tryptophan synthase beta chain.